Reading from the N-terminus, the 802-residue chain is DNA mismatch repair protein MutS (802 aa).

617 to 624 (GPNMGGKS) is a binding site for ATP.

Belongs to the DNA mismatch repair MutS family.

In terms of biological role, this protein is involved in the repair of mismatches in DNA. It is possible that it carries out the mismatch recognition step. This protein has a weak ATPase activity. This chain is DNA mismatch repair protein MutS, found in Buchnera aphidicola subsp. Acyrthosiphon pisum (strain 5A).